The chain runs to 201 residues: Small ribosomal subunit protein uS4 (201 aa).

The S4 RNA-binding domain occupies 103–167; that stretch reads RRLQTIVTKK…SKIPQVLEKT (65 aa). The disordered stretch occupies residues 163–201; it reads VLEKTKSEAPAEETVEAPAEETVEAPAEEKKEESPSTES. Over residues 172-185 the composition is skewed to acidic residues; that stretch reads PAEETVEAPAEETV. Residues 189–201 show a composition bias toward basic and acidic residues; that stretch reads AEEKKEESPSTES.

Belongs to the universal ribosomal protein uS4 family. Part of the 30S ribosomal subunit. Contacts protein S5. The interaction surface between S4 and S5 is involved in control of translational fidelity.

In terms of biological role, one of the primary rRNA binding proteins, it binds directly to 16S rRNA where it nucleates assembly of the body of the 30S subunit. Its function is as follows. With S5 and S12 plays an important role in translational accuracy. This Nitrosopumilus maritimus (strain SCM1) protein is Small ribosomal subunit protein uS4.